The following is a 102-amino-acid chain: Small ribosomal subunit protein uS10 (102 aa).

Belongs to the universal ribosomal protein uS10 family. In terms of assembly, part of the 30S ribosomal subunit.

In terms of biological role, involved in the binding of tRNA to the ribosomes. The polypeptide is Small ribosomal subunit protein uS10 (Malacoplasma penetrans (strain HF-2) (Mycoplasma penetrans)).